The primary structure comprises 66 residues: DNA-directed RNA polymerase subunit Rpo10 (66 aa).

Zn(2+) contacts are provided by cysteine 7, cysteine 10, cysteine 44, and cysteine 45.

This sequence belongs to the archaeal Rpo10/eukaryotic RPB10 RNA polymerase subunit family. In terms of assembly, part of the RNA polymerase complex. The cofactor is Zn(2+).

It localises to the cytoplasm. The catalysed reaction is RNA(n) + a ribonucleoside 5'-triphosphate = RNA(n+1) + diphosphate. Its function is as follows. DNA-dependent RNA polymerase (RNAP) catalyzes the transcription of DNA into RNA using the four ribonucleoside triphosphates as substrates. This is DNA-directed RNA polymerase subunit Rpo10 from Sulfurisphaera tokodaii (strain DSM 16993 / JCM 10545 / NBRC 100140 / 7) (Sulfolobus tokodaii).